Reading from the N-terminus, the 342-residue chain is P2Y purinoceptor 12 (342 aa).

Residues 1–27 are Extracellular-facing; the sequence is MQAVDNLTSAPGNTSLCTRDYKITQVL. N-linked (GlcNAc...) asparagine glycosylation is found at Asn6 and Asn13. Intrachain disulfides connect Cys17-Cys270 and Cys97-Cys175. Residues 28–50 traverse the membrane as a helical segment; it reads FPLLYTVLFFVGLITNGLAMRIF. Over 51-61 the chain is Cytoplasmic; it reads FQIRSKSNFII. A phosphoserine mark is found at Ser55 and Ser57. A helical transmembrane segment spans residues 62–82; that stretch reads FLKNTVISDLLMILTFPFKIL. The Extracellular segment spans residues 83-97; the sequence is SDAKLGTGPLRTFVC. ADP contacts are provided by Arg93, Cys97, and Tyr105. Residues 98–118 form a helical membrane-spanning segment; sequence QVTSVIFYFTMYISISFLGLI. The Cytoplasmic portion of the chain corresponds to 119 to 142; that stretch reads TIDRYQKTTRPFKTSNPKNLLGAK. The chain crosses the membrane as a helical span at residues 143–162; sequence ILSVVIWAFMFLLSLPNMIL. ADP is bound by residues 156 to 159, 175 to 179, His187, and Asn191; these read SLPN and CSFLK. Over 163–185 the chain is Extracellular; sequence TNRQPRDKNVKKCSFLKSEFGLV. The helical transmembrane segment at 186-207 threads the bilayer; that stretch reads WHEIVNYICQVIFWINFLIVIV. The Cytoplasmic segment spans residues 208 to 233; it reads CYTLITKELYRSYVRTRGVGKVPRKK. Residues 234–259 traverse the membrane as a helical segment; that stretch reads VNVKVFIIIAVFFICFVPFHFARIPY. ADP contacts are provided by residues 256–259, Gln263, and Lys280; that span reads RIPY. The Extracellular portion of the chain corresponds to 260-278; sequence TLSQTRDVFDCTAENTLFY. Residues 279 to 298 form a helical membrane-spanning segment; the sequence is VKESTLWLTSLNACLDPFIY. Residues 299–342 lie on the Cytoplasmic side of the membrane; sequence FFLCKSFRNSLISMLKCPNSATSLSQDNRKKEQDGGDPNEETPM. A disordered region spans residues 319–342; that stretch reads ATSLSQDNRKKEQDGGDPNEETPM. Acidic residues predominate over residues 333–342; sequence GGDPNEETPM.

It belongs to the G-protein coupled receptor 1 family. In terms of tissue distribution, highly expressed in the platelets, lower levels in the brain. Lowest levels in the lung, appendix, pituitary and adrenal gland. Expressed in the spinal cord and in the fetal brain.

Its subcellular location is the cell membrane. Functionally, receptor for ADP and ATP coupled to G-proteins that inhibit the adenylyl cyclase second messenger system. Not activated by UDP and UTP. Required for normal platelet aggregation and blood coagulation. The protein is P2Y purinoceptor 12 (P2RY12) of Homo sapiens (Human).